We begin with the raw amino-acid sequence, 162 residues long: Probable chemoreceptor glutamine deamidase CheD (162 aa).

It belongs to the CheD family.

The enzyme catalyses L-glutaminyl-[protein] + H2O = L-glutamyl-[protein] + NH4(+). Functionally, probably deamidates glutamine residues to glutamate on methyl-accepting chemotaxis receptors (MCPs), playing an important role in chemotaxis. The protein is Probable chemoreceptor glutamine deamidase CheD of Clostridium botulinum (strain ATCC 19397 / Type A).